We begin with the raw amino-acid sequence, 382 residues long: 1-deoxy-D-xylulose 5-phosphate reductoisomerase (382 aa).

Positions 10, 11, 12, 13, 38, and 120 each coordinate NADPH. K121 serves as a coordination point for 1-deoxy-D-xylulose 5-phosphate. NADPH is bound at residue E122. A Mn(2+)-binding site is contributed by D146. S147, E148, S172, and H195 together coordinate 1-deoxy-D-xylulose 5-phosphate. Position 148 (E148) interacts with Mn(2+). G201 contacts NADPH. Positions 208, 213, 214, and 217 each coordinate 1-deoxy-D-xylulose 5-phosphate. E217 contributes to the Mn(2+) binding site.

This sequence belongs to the DXR family. Mg(2+) serves as cofactor. It depends on Mn(2+) as a cofactor.

The enzyme catalyses 2-C-methyl-D-erythritol 4-phosphate + NADP(+) = 1-deoxy-D-xylulose 5-phosphate + NADPH + H(+). The protein operates within isoprenoid biosynthesis; isopentenyl diphosphate biosynthesis via DXP pathway; isopentenyl diphosphate from 1-deoxy-D-xylulose 5-phosphate: step 1/6. In terms of biological role, catalyzes the NADPH-dependent rearrangement and reduction of 1-deoxy-D-xylulose-5-phosphate (DXP) to 2-C-methyl-D-erythritol 4-phosphate (MEP). The protein is 1-deoxy-D-xylulose 5-phosphate reductoisomerase of Caldanaerobacter subterraneus subsp. tengcongensis (strain DSM 15242 / JCM 11007 / NBRC 100824 / MB4) (Thermoanaerobacter tengcongensis).